The chain runs to 777 residues: MDADSDWRSAPFRQKLVSQIDEAMRKAGVAHTKSSKDMESHVFLKAKTREEYLSLVARLIIHFRDILNKKSQAAATDPMNALQNLTGTAVVGGQGMGMGVRPQGAQMGAMSGMAQMAQQMNLPGQPQPGASGMAPHGITGVAAGNQATQLQLQQIAQHQQQQFQQQQQQAALQHQQQQFQVAQQQQFQVVAVAAAQQQQQQQQQQQQQQQQVQQQQQQLQAAAQQQHILKLQLQQQQNQQQQLQQQQQQQLQRIAHLQQMQQMQQQQQQQQQQQQQQQQQPPPQQVMQLQQMQQQQVAQSQQQQLLSTQPQAPSLVAQGQIPSQVMPVTLTPQQQQQLKILQQVRAQQQQQAQHQAQQQAQQQAHQQAQQQAQQQAQQQAAQQQAQQAAQQAQQQAQQAAQQQAAQAHLAAGQVTQNSIPVMSSPSPVQQVQTPQPMPPPPQPSPQPSQPMSQPNSNVSSGPAPSPSSFMPSPSPQPSQSPASARTPQNFSVPSPGPLNTPGNPNSVMSPASNNQSEEQQYLDKLKQLSKYIEPLRRMINKIDKNEERKKDLSKMKSLLDILTDPNKRCPLKTLQKCEIALEKLKNDMAVPTPPPPTVPSTKQQYLCQPLLDAVLANIRSPVFNHSLYRTFMPAMTAIHGQPIASQLVVPRKRKFEEDERQSIPNVLQGEVAKLHSKFLVNLDPSHCSNNGTVYLICKLDDKNLPSVPPLQLSVPADYPDQSPLWMDNPRDYEANPFLQSVYRYMTSKLLQLPDKHSLTALLNTWAQSIRQACLSAA.

2 disordered regions span residues 120–139 (MNLPGQPQPGASGMAPHGIT) and 418–520 (SIPV…EEQQ). Positions 420–434 (PVMSSPSPVQQVQTP) are enriched in low complexity. Over residues 435-448 (QPMPPPPQPSPQPS) the composition is skewed to pro residues. Residues 449-471 (QPMSQPNSNVSSGPAPSPSSFMP) show a composition bias toward low complexity. Over residues 500–519 (TPGNPNSVMSPASNNQSEEQ) the composition is skewed to polar residues.

Belongs to the Mediator complex subunit 15 family. Component of the Mediator complex. Interacts with srebf1 and srebf2. Interacts with smad2, smad3 and smad4.

It localises to the cytoplasm. The protein resides in the nucleus. In terms of biological role, component of the Mediator complex, a coactivator involved in the regulated transcription of nearly all RNA polymerase II-dependent genes. Mediator functions as a bridge to convey information from gene-specific regulatory proteins to the basal RNA polymerase II transcription machinery. Mediator is recruited to promoters by direct interactions with regulatory proteins and serves as a scaffold for the assembly of a functional preinitiation complex with RNA polymerase II and the general transcription factors. Required for cholesterol-dependent gene regulation. Positively regulates the Nodal signaling pathway. This is Mediator of RNA polymerase II transcription subunit 15 (med15) from Xenopus laevis (African clawed frog).